Consider the following 116-residue polypeptide: Iron-sulfur cluster insertion protein ErpA (116 aa).

Iron-sulfur cluster-binding residues include Cys44, Cys108, and Cys110.

It belongs to the HesB/IscA family. Homodimer. The cofactor is iron-sulfur cluster.

In terms of biological role, required for insertion of 4Fe-4S clusters for at least IspG. The chain is Iron-sulfur cluster insertion protein ErpA from Nitrosococcus oceani (strain ATCC 19707 / BCRC 17464 / JCM 30415 / NCIMB 11848 / C-107).